The following is a 516-amino-acid chain: Protein indeterminate-domain 4, chloroplastic (516 aa).

The span at 1–26 (MSSSSYNTSVIPSSSSSAQPFFITSS) shows a compositional bias: low complexity. A disordered region spans residues 1 to 68 (MSSSSYNTSV…QPGNPNPDAE (68 aa)). The N-terminal 70 residues, 1–70 (MSSSSYNTSV…GNPNPDAEVV (70 aa)), are a transit peptide targeting the chloroplast. At Ser73 the chain carries Phosphoserine. C2H2-type zinc fingers lie at residues 83-105 (FICDVCNKGFQREQNLQLHRRGH) and 124-154 (YLCPEPTCVHHDPSRALGDLTGIKKHYYRKH). A Nuclear localization signal motif is present at residues 146-153 (IKKHYYRK). The C2H2-type 2; degenerate zinc finger occupies 159–182 (WKCEKCSKRYAVQSDWKAHSKTCG). 8 residues coordinate Zn(2+): Cys161, Cys164, His177, Cys181, Cys188, Cys190, His203, and Cys207. Residues 186–209 (YRCDCGTIFSRRDSYITHRAFCDA) form a CCHC-type 2; atypical zinc finger. The tract at residues 196–208 (RRDSYITHRAFCD) is SHR-binding. Residues 483–516 (NRGGGGGGRGSARGGVSLDGEAKFPEQNYPFGRG) form a disordered region. The span at 484 to 495 (RGGGGGGRGSAR) shows a compositional bias: gly residues.

Binds to RGA and SCL3 competitively in the nucleus.

Its subcellular location is the plastid. It localises to the chloroplast. The protein resides in the nucleus. Functionally, transcription factor that may act a transcriptional activator of nuclear-encoded photosynthetic gene expression. Binds DNA via its zinc fingers. Recognizes and binds to SCL3 promoter sequence 5'-AGACAA-3' to promote its expression when in complex with RGA. The sequence is that of Protein indeterminate-domain 4, chloroplastic from Arabidopsis thaliana (Mouse-ear cress).